The sequence spans 200 residues: Holliday junction branch migration complex subunit RuvA (200 aa).

The domain I stretch occupies residues Met-1–Ala-64. A domain II region spans residues Thr-65 to Ser-143. The flexible linker stretch occupies residues Ala-144–Val-148. The domain III stretch occupies residues Ser-149 to Arg-200.

It belongs to the RuvA family. As to quaternary structure, homotetramer. Forms an RuvA(8)-RuvB(12)-Holliday junction (HJ) complex. HJ DNA is sandwiched between 2 RuvA tetramers; dsDNA enters through RuvA and exits via RuvB. An RuvB hexamer assembles on each DNA strand where it exits the tetramer. Each RuvB hexamer is contacted by two RuvA subunits (via domain III) on 2 adjacent RuvB subunits; this complex drives branch migration. In the full resolvosome a probable DNA-RuvA(4)-RuvB(12)-RuvC(2) complex forms which resolves the HJ.

Its subcellular location is the cytoplasm. The RuvA-RuvB-RuvC complex processes Holliday junction (HJ) DNA during genetic recombination and DNA repair, while the RuvA-RuvB complex plays an important role in the rescue of blocked DNA replication forks via replication fork reversal (RFR). RuvA specifically binds to HJ cruciform DNA, conferring on it an open structure. The RuvB hexamer acts as an ATP-dependent pump, pulling dsDNA into and through the RuvAB complex. HJ branch migration allows RuvC to scan DNA until it finds its consensus sequence, where it cleaves and resolves the cruciform DNA. The protein is Holliday junction branch migration complex subunit RuvA of Gluconobacter oxydans (strain 621H) (Gluconobacter suboxydans).